The following is a 70-amino-acid chain: uncharacterized protein (70 aa).

The helical transmembrane segment at 15–37 (IFAFLLFRLCKFCCVFCCALCNV) threads the bilayer.

It is found in the membrane. This is an uncharacterized protein from Dictyostelium discoideum (Social amoeba).